A 393-amino-acid chain; its full sequence is MTILGTALTPKATKVMLLGSGELGKEVVIELQRLGVEVIAVDRYENAPAQQVAHRSYTISMLDGNALKALIEKEKPDYIVPEVEAIATSTLVELEQAGFNVVPTAKATQLTMNREGIRRLAAEKLKLPTSNYQFVDNFDDFQSAVENLGIPCVIKPIMSSSGHGQSILKSKDDLQKAWDYAQQGGRAGAGRVIVEGFVKFDYEITLLTVRHAEGTSFLAPIGHRQEKGDYRESWQPQAMSVQALAKAQHIAEKITTELGGRGIFGVEMFVCGDEVIFNEVSPRPHDTGMVTLISQELSEFALHARAILGLPIPEINLISPAASKAIVVEGKSNQVQFGNLFEVLQEPNTNIRLFGKGEVNGHRRLGVILARDISVDKALEKVSRAYDKLDIQL.

N(1)-(5-phospho-beta-D-ribosyl)glycinamide-binding positions include 22 to 23 and E82; that span reads EL. ATP is bound by residues R114, K155, 160-165, 195-198, and E203; these read SSGHGQ and EGFV. Residues 119–308 enclose the ATP-grasp domain; it reads RLAAEKLKLP…EFALHARAIL (190 aa). Mg(2+) is bound by residues E267 and E279. Residues D286, K356, and 363 to 364 contribute to the N(1)-(5-phospho-beta-D-ribosyl)glycinamide site; that span reads RR.

The protein belongs to the PurK/PurT family. Homodimer.

It carries out the reaction N(1)-(5-phospho-beta-D-ribosyl)glycinamide + formate + ATP = N(2)-formyl-N(1)-(5-phospho-beta-D-ribosyl)glycinamide + ADP + phosphate + H(+). It functions in the pathway purine metabolism; IMP biosynthesis via de novo pathway; N(2)-formyl-N(1)-(5-phospho-D-ribosyl)glycinamide from N(1)-(5-phospho-D-ribosyl)glycinamide (formate route): step 1/1. In terms of biological role, involved in the de novo purine biosynthesis. Catalyzes the transfer of formate to 5-phospho-ribosyl-glycinamide (GAR), producing 5-phospho-ribosyl-N-formylglycinamide (FGAR). Formate is provided by PurU via hydrolysis of 10-formyl-tetrahydrofolate. In Histophilus somni (strain 129Pt) (Haemophilus somnus), this protein is Formate-dependent phosphoribosylglycinamide formyltransferase.